A 201-amino-acid chain; its full sequence is Superoxide dismutase [Mn/Fe] (201 aa).

The Fe(3+) site is built by His-27, His-75, Asp-161, and His-165. Residues His-27, His-75, Asp-161, and His-165 each contribute to the Mn(2+) site.

The protein belongs to the iron/manganese superoxide dismutase family. Homotetramer. The cofactor is Mn(2+). It depends on Fe(3+) as a cofactor.

The catalysed reaction is 2 superoxide + 2 H(+) = H2O2 + O2. Shows decreasing activity with increasing pH. Slightly inhibited by azide and fluoride at pH 7-8; the inhibition is drastically increased towards lower pH. Its function is as follows. Destroys superoxide anion radicals which are normally produced within the cells and which are toxic to biological systems. Catalyzes the dismutation of superoxide anion radicals into O2 and H2O2 by successive reduction and oxidation of the transition metal ion at the active site. This chain is Superoxide dismutase [Mn/Fe] (sodA), found in Propionibacterium freudenreichii subsp. shermanii.